The following is a 162-amino-acid chain: MLNQLENLTERVGGSNKLVDRWLDVRKHLLVAYYNLVGIKPGKESYMRLNEKALDNFCQSLVDYLSAGHFSIYERILHKLEGNGQLLHAAKIWPLLEDNTQRIMDYYDTSLETAIDHDNCLEFQQALSDIGEALEARFVLEDKLIMLVFDAMHDGARVKRPA.

Belongs to the Rsd/AlgQ family. In terms of assembly, interacts with RpoD.

It localises to the cytoplasm. Functionally, binds RpoD and negatively regulates RpoD-mediated transcription activation by preventing the interaction between the primary sigma factor RpoD with the catalytic core of the RNA polymerase and with promoter DNA. May be involved in replacement of the RNA polymerase sigma subunit from RpoD to RpoS during the transition from exponential growth to the stationary phase. The sequence is that of Regulator of sigma D from Salmonella choleraesuis (strain SC-B67).